The following is a 1072-amino-acid chain: DNA-directed RNA polymerase subunit beta (1072 aa).

The protein belongs to the RNA polymerase beta chain family. In plastids the minimal PEP RNA polymerase catalytic core is composed of four subunits: alpha, beta, beta', and beta''. When a (nuclear-encoded) sigma factor is associated with the core the holoenzyme is formed, which can initiate transcription.

It localises to the plastid. Its subcellular location is the chloroplast. It carries out the reaction RNA(n) + a ribonucleoside 5'-triphosphate = RNA(n+1) + diphosphate. In terms of biological role, DNA-dependent RNA polymerase catalyzes the transcription of DNA into RNA using the four ribonucleoside triphosphates as substrates. This Olimarabidopsis pumila (Dwarf rocket) protein is DNA-directed RNA polymerase subunit beta.